The chain runs to 152 residues: Globin-1 subunit beta (152 aa).

Ser-2 carries the N-acetylserine modification. The Globin domain maps to 12 to 152 (VSNADQKDLL…SLVAVVQAAL (141 aa)). Heme b is bound by residues His-72 and His-104.

This sequence belongs to the globin family. As to quaternary structure, heterotetramer of two alpha chains and two beta chains.

The polypeptide is Globin-1 subunit beta (Anadara trapezia (Sydney cockle)).